A 273-amino-acid chain; its full sequence is Dermonecrotic toxin LdSicTox-alphaIB1aiv (273 aa).

His5 is an active-site residue. Residues Glu25 and Asp27 each contribute to the Mg(2+) site. His41 (nucleophile) is an active-site residue. 2 disulfides stabilise this stretch: Cys45–Cys51 and Cys47–Cys190. Residue Asp85 participates in Mg(2+) binding. Asn250 carries an N-linked (GlcNAc...) asparagine glycan.

The protein belongs to the arthropod phospholipase D family. Class II subfamily. Mg(2+) is required as a cofactor. Expressed by the venom gland.

It localises to the secreted. It carries out the reaction an N-(acyl)-sphingosylphosphocholine = an N-(acyl)-sphingosyl-1,3-cyclic phosphate + choline. The catalysed reaction is an N-(acyl)-sphingosylphosphoethanolamine = an N-(acyl)-sphingosyl-1,3-cyclic phosphate + ethanolamine. It catalyses the reaction a 1-acyl-sn-glycero-3-phosphocholine = a 1-acyl-sn-glycero-2,3-cyclic phosphate + choline. The enzyme catalyses a 1-acyl-sn-glycero-3-phosphoethanolamine = a 1-acyl-sn-glycero-2,3-cyclic phosphate + ethanolamine. Functionally, dermonecrotic toxins cleave the phosphodiester linkage between the phosphate and headgroup of certain phospholipids (sphingolipid and lysolipid substrates), forming an alcohol (often choline) and a cyclic phosphate. This toxin acts on sphingomyelin (SM). It may also act on ceramide phosphoethanolamine (CPE), lysophosphatidylcholine (LPC) and lysophosphatidylethanolamine (LPE), but not on lysophosphatidylserine (LPS), and lysophosphatidylglycerol (LPG). It acts by transphosphatidylation, releasing exclusively cyclic phosphate products as second products. Induces dermonecrosis, hemolysis, increased vascular permeability, edema, inflammatory response, and platelet aggregation. This Loxosceles deserta (Desert recluse spider) protein is Dermonecrotic toxin LdSicTox-alphaIB1aiv.